Reading from the N-terminus, the 423-residue chain is Type II methyltransferase M.NgoBV (423 aa).

Positions 4 to 423 (IKFIDLFSGM…AVSERLLHTL (420 aa)) constitute an SAM-dependent MTase C5-type domain. Residue Cys80 is part of the active site.

It belongs to the class I-like SAM-binding methyltransferase superfamily. C5-methyltransferase family.

The enzyme catalyses a 2'-deoxycytidine in DNA + S-adenosyl-L-methionine = a 5-methyl-2'-deoxycytidine in DNA + S-adenosyl-L-homocysteine + H(+). In terms of biological role, a methylase, recognizes the double-stranded sequence 5'-GGNNCC-3', methylates C-5 on both strands, and protects the DNA from cleavage by the NgoBV endonuclease. The chain is Type II methyltransferase M.NgoBV (ngoBVM) from Neisseria gonorrhoeae.